Reading from the N-terminus, the 189-residue chain is Xanthine phosphoribosyltransferase (189 aa).

Leucine 20 and asparagine 27 together coordinate xanthine. 128–132 (ANGKA) contacts 5-phospho-alpha-D-ribose 1-diphosphate. Lysine 156 is a xanthine binding site.

This sequence belongs to the purine/pyrimidine phosphoribosyltransferase family. Xpt subfamily. Homodimer.

Its subcellular location is the cytoplasm. It carries out the reaction XMP + diphosphate = xanthine + 5-phospho-alpha-D-ribose 1-diphosphate. It functions in the pathway purine metabolism; XMP biosynthesis via salvage pathway; XMP from xanthine: step 1/1. Functionally, converts the preformed base xanthine, a product of nucleic acid breakdown, to xanthosine 5'-monophosphate (XMP), so it can be reused for RNA or DNA synthesis. This is Xanthine phosphoribosyltransferase from Pseudomonas syringae pv. syringae (strain B728a).